Here is a 293-residue protein sequence, read N- to C-terminus: Putative ribose uptake protein RbsU (293 aa).

10 consecutive transmembrane segments (helical) span residues 5–24 (ALLI…TVAS), 34–51 (IIGA…LAVV), 58–80 (TGTN…IITF), 95–114 (TTAF…LGNW), 121–138 (IIGF…RMTV), 153–170 (RAVV…LYSA), 177–199 (IDGL…IYGF), 212–234 (ITWL…LISA), 241–263 (LATG…IYFL), and 273–292 (VITI…TVFI).

The protein belongs to the GRP transporter (TC 2.A.7.5) family.

The protein resides in the cell membrane. Its function is as follows. Could be involved in the uptake of ribose. The polypeptide is Putative ribose uptake protein RbsU (rbsU) (Staphylococcus aureus (strain COL)).